Reading from the N-terminus, the 558-residue chain is FRIGIDA-like protein 3 (558 aa).

Residues 9–102 (SLMDSTSSKI…ALERLQKKRD (94 aa)) adopt a coiled-coil conformation. Over residues 454-463 (AKADKKRATE) the composition is skewed to basic and acidic residues. The tract at residues 454-494 (AKADKKRATEPMKPQPKRPRGAQPRVTDNNNNINNNKTGYG) is disordered.

The protein belongs to the Frigida family.

This Arabidopsis thaliana (Mouse-ear cress) protein is FRIGIDA-like protein 3 (FRL3).